The primary structure comprises 282 residues: Pantothenate synthetase (282 aa).

An ATP-binding site is contributed by 26–33 (MGNLHEGH). Histidine 33 (proton donor) is an active-site residue. Glutamine 57 is a (R)-pantoate binding site. Glutamine 57 contributes to the beta-alanine binding site. An ATP-binding site is contributed by 148 to 151 (GKKD). Glutamine 154 is a binding site for (R)-pantoate. 185-188 (LSSR) contacts ATP.

Belongs to the pantothenate synthetase family. As to quaternary structure, homodimer.

Its subcellular location is the cytoplasm. The enzyme catalyses (R)-pantoate + beta-alanine + ATP = (R)-pantothenate + AMP + diphosphate + H(+). Its pathway is cofactor biosynthesis; (R)-pantothenate biosynthesis; (R)-pantothenate from (R)-pantoate and beta-alanine: step 1/1. Its function is as follows. Catalyzes the condensation of pantoate with beta-alanine in an ATP-dependent reaction via a pantoyl-adenylate intermediate. The polypeptide is Pantothenate synthetase (Paracidovorax citrulli (strain AAC00-1) (Acidovorax citrulli)).